Here is a 357-residue protein sequence, read N- to C-terminus: Tetraacyldisaccharide 4'-kinase (357 aa).

49–56 (TIGGTGKT) serves as a coordination point for ATP.

This sequence belongs to the LpxK family.

It carries out the reaction a lipid A disaccharide + ATP = a lipid IVA + ADP + H(+). Its pathway is glycolipid biosynthesis; lipid IV(A) biosynthesis; lipid IV(A) from (3R)-3-hydroxytetradecanoyl-[acyl-carrier-protein] and UDP-N-acetyl-alpha-D-glucosamine: step 6/6. In terms of biological role, transfers the gamma-phosphate of ATP to the 4'-position of a tetraacyldisaccharide 1-phosphate intermediate (termed DS-1-P) to form tetraacyldisaccharide 1,4'-bis-phosphate (lipid IVA). The chain is Tetraacyldisaccharide 4'-kinase from Porphyromonas gingivalis (strain ATCC BAA-308 / W83).